Consider the following 611-residue polypeptide: Probable inactive purple acid phosphatase 27 (611 aa).

The first 18 residues, 1–18, serve as a signal peptide directing secretion; that stretch reads MARNFLLVLLWFIVQVSS. Asn-263 and Asn-271 each carry an N-linked (GlcNAc...) asparagine glycan. Asp-293 provides a ligand contact to Fe cation. N-linked (GlcNAc...) asparagine glycosylation occurs at Asn-314. Residues Asp-334 and Tyr-337 each coordinate Fe cation. Asp-334 serves as a coordination point for Zn(2+). Zn(2+)-binding residues include Asn-367, His-456, and His-498. Substrate is bound at residue Asn-367. Residue 498-500 participates in substrate binding; the sequence is HVH. His-500 is a binding site for Fe cation.

It belongs to the metallophosphoesterase superfamily. Purple acid phosphatase family. Homodimer. It depends on Fe cation as a cofactor. The cofactor is Zn(2+). Expressed in roots, stems, leaves, flowers and siliques.

It localises to the secreted. In Arabidopsis thaliana (Mouse-ear cress), this protein is Probable inactive purple acid phosphatase 27 (PAP27).